The sequence spans 212 residues: Lipid A acyltransferase PagP (212 aa).

The signal sequence occupies residues 1-26 (MSSTYFHSSLLAATLFSVTLTAPAFA). The segment covering 29–44 (NTQNTPQTITTKKPQP) has biased composition (low complexity). Residues 29–50 (NTQNTPQTITTKKPQPAENTFS) form a disordered region. Residues His-84, Asp-127, and Ser-128 contribute to the active site.

Belongs to the lipid A palmitoyltransferase family. In terms of assembly, homodimer.

It localises to the cell outer membrane. It carries out the reaction a lipid A + a 1,2-diacyl-sn-glycero-3-phosphocholine = a hepta-acyl lipid A + a 2-acyl-sn-glycero-3-phosphocholine. It catalyses the reaction a lipid IVA + a 1,2-diacyl-sn-glycero-3-phosphocholine = a lipid IVB + a 2-acyl-sn-glycero-3-phosphocholine. The catalysed reaction is a lipid IIA + a 1,2-diacyl-sn-glycero-3-phosphocholine = a lipid IIB + a 2-acyl-sn-glycero-3-phosphocholine. Its function is as follows. Transfers a fatty acid residue from the sn-1 position of a phospholipid to the N-linked hydroxyfatty acid chain on the proximal unit of lipid A or its precursors. The sequence is that of Lipid A acyltransferase PagP from Proteus mirabilis (strain HI4320).